The following is a 246-amino-acid chain: Probable septum site-determining protein MinC (246 aa).

This sequence belongs to the MinC family. In terms of assembly, interacts with MinD and FtsZ.

Functionally, cell division inhibitor that blocks the formation of polar Z ring septums. Rapidly oscillates between the poles of the cell to destabilize FtsZ filaments that have formed before they mature into polar Z rings. Prevents FtsZ polymerization. The chain is Probable septum site-determining protein MinC from Pseudomonas syringae pv. tomato (strain ATCC BAA-871 / DC3000).